A 160-amino-acid chain; its full sequence is Putative NrdI-like protein (160 aa).

It belongs to the NrdI family.

The chain is Putative NrdI-like protein from Streptococcus pyogenes serotype M3 (strain ATCC BAA-595 / MGAS315).